Here is a 498-residue protein sequence, read N- to C-terminus: Elastase (498 aa).

Residues 1–23 (MKKVSTLDLLFVAIMGVSPAAFA) form the signal peptide. The propeptide occupies 24 to 197 (ADLIDVSKLP…VLDQWEGLAH (174 aa)). Cysteine 227 and cysteine 255 are oxidised to a cystine. A Phosphothreonine modification is found at threonine 236. Aspartate 333 is a binding site for Ca(2+). A Zn(2+)-binding site is contributed by histidine 337. Glutamate 338 is an active-site residue. Zn(2+) contacts are provided by histidine 341 and glutamate 361. Residues glutamate 369, glutamate 372, aspartate 380, and leucine 382 each coordinate Ca(2+). The active-site Proton donor is histidine 420. Cysteines 467 and 494 form a disulfide.

It belongs to the peptidase M4 family. Requires Ca(2+) as cofactor. Zn(2+) is required as a cofactor. In terms of processing, made as a pre-pro-protein which is exported to the periplasm. Probably autocatalyzes cleavage of its pro-peptide. The pro-peptide can be secreted with mature elastase.

It is found in the secreted. It carries out the reaction Hydrolysis of proteins including elastin, collagen types III and IV, fibronectin and immunoglobulin A, generally with bulky hydrophobic group at P1'. Insulin B chain cleavage pattern identical to that of thermolysin, but specificity differs in other respects.. Cleaves host elastase, collagen, IgI and several complement components as well as endogenous pro-aminopeptidase, pro-chitin-binding protein (cbpD). Cleaves its own pro-peptide. Involved in the pathogenesis of P.aeruginosa infections. This is Elastase (lasB) from Pseudomonas aeruginosa (strain UCBPP-PA14).